The chain runs to 240 residues: 2-C-methyl-D-erythritol 4-phosphate cytidylyltransferase (240 aa).

It belongs to the IspD/TarI cytidylyltransferase family. IspD subfamily.

It catalyses the reaction 2-C-methyl-D-erythritol 4-phosphate + CTP + H(+) = 4-CDP-2-C-methyl-D-erythritol + diphosphate. It functions in the pathway isoprenoid biosynthesis; isopentenyl diphosphate biosynthesis via DXP pathway; isopentenyl diphosphate from 1-deoxy-D-xylulose 5-phosphate: step 2/6. Catalyzes the formation of 4-diphosphocytidyl-2-C-methyl-D-erythritol from CTP and 2-C-methyl-D-erythritol 4-phosphate (MEP). The polypeptide is 2-C-methyl-D-erythritol 4-phosphate cytidylyltransferase (Chlorobium luteolum (strain DSM 273 / BCRC 81028 / 2530) (Pelodictyon luteolum)).